Here is a 1272-residue protein sequence, read N- to C-terminus: uncharacterized protein (1272 aa).

This is an uncharacterized protein from Methanocaldococcus jannaschii (strain ATCC 43067 / DSM 2661 / JAL-1 / JCM 10045 / NBRC 100440) (Methanococcus jannaschii).